The chain runs to 218 residues: Octanoyltransferase (218 aa).

The 183-residue stretch at 30 to 212 (ENTADEIWLV…HFYNILGYNA (183 aa)) folds into the BPL/LPL catalytic domain. Substrate-binding positions include 69–76 (RGGQITYH), 141–143 (SLG), and 154–156 (GLA). Cys-172 functions as the Acyl-thioester intermediate in the catalytic mechanism.

It belongs to the LipB family.

Its subcellular location is the cytoplasm. The enzyme catalyses octanoyl-[ACP] + L-lysyl-[protein] = N(6)-octanoyl-L-lysyl-[protein] + holo-[ACP] + H(+). Its pathway is protein modification; protein lipoylation via endogenous pathway; protein N(6)-(lipoyl)lysine from octanoyl-[acyl-carrier-protein]: step 1/2. Catalyzes the transfer of endogenously produced octanoic acid from octanoyl-acyl-carrier-protein onto the lipoyl domains of lipoate-dependent enzymes. Lipoyl-ACP can also act as a substrate although octanoyl-ACP is likely to be the physiological substrate. This chain is Octanoyltransferase, found in Actinobacillus pleuropneumoniae serotype 5b (strain L20).